The chain runs to 153 residues: Large ribosomal subunit protein uL22 (153 aa).

The protein belongs to the universal ribosomal protein uL22 family. Part of the 50S ribosomal subunit.

In terms of biological role, this protein binds specifically to 23S rRNA. It makes multiple contacts with different domains of the 23S rRNA in the assembled 50S subunit and ribosome. The globular domain of the protein is located near the polypeptide exit tunnel on the outside of the subunit, while an extended beta-hairpin is found that lines the wall of the exit tunnel in the center of the 70S ribosome. The sequence is that of Large ribosomal subunit protein uL22 from Methanoculleus marisnigri (strain ATCC 35101 / DSM 1498 / JR1).